Reading from the N-terminus, the 133-residue chain is ATP synthase epsilon chain, chloroplastic (133 aa).

Belongs to the ATPase epsilon chain family. As to quaternary structure, F-type ATPases have 2 components, CF(1) - the catalytic core - and CF(0) - the membrane proton channel. CF(1) has five subunits: alpha(3), beta(3), gamma(1), delta(1), epsilon(1). CF(0) has three main subunits: a, b and c.

The protein localises to the plastid. It localises to the chloroplast thylakoid membrane. Produces ATP from ADP in the presence of a proton gradient across the membrane. The polypeptide is ATP synthase epsilon chain, chloroplastic (Jasminum nudiflorum (Winter jasmine)).